Consider the following 742-residue polypeptide: 5-methyltetrahydropteroyltriglutamate--homocysteine methyltransferase (742 aa).

Residues 18 to 21 (REWK) and Lys-112 contribute to the 5-methyltetrahydropteroyltri-L-glutamate site. L-homocysteine contacts are provided by residues 420–422 (IGS) and Glu-473. L-methionine contacts are provided by residues 420 to 422 (IGS) and Glu-473. 5-methyltetrahydropteroyltri-L-glutamate is bound at residue Trp-550. Asp-588 is an L-homocysteine binding site. An L-methionine-binding site is contributed by Asp-588. Position 594 (Glu-594) interacts with 5-methyltetrahydropteroyltri-L-glutamate. Residues His-630, Cys-632, and Glu-654 each coordinate Zn(2+). His-683 functions as the Proton donor in the catalytic mechanism. Position 715 (Cys-715) interacts with Zn(2+).

The protein belongs to the vitamin-B12 independent methionine synthase family. Zn(2+) serves as cofactor.

It carries out the reaction 5-methyltetrahydropteroyltri-L-glutamate + L-homocysteine = tetrahydropteroyltri-L-glutamate + L-methionine. It functions in the pathway amino-acid biosynthesis; L-methionine biosynthesis via de novo pathway; L-methionine from L-homocysteine (MetE route): step 1/1. Its function is as follows. Catalyzes the transfer of a methyl group from 5-methyltetrahydrofolate to homocysteine resulting in methionine formation. This chain is 5-methyltetrahydropteroyltriglutamate--homocysteine methyltransferase, found in Staphylococcus aureus (strain MRSA252).